A 341-amino-acid chain; its full sequence is Phenylalanine--tRNA ligase alpha subunit (341 aa).

Glutamate 253 contributes to the Mg(2+) binding site.

This sequence belongs to the class-II aminoacyl-tRNA synthetase family. Phe-tRNA synthetase alpha subunit type 1 subfamily. Tetramer of two alpha and two beta subunits. The cofactor is Mg(2+).

The protein resides in the cytoplasm. The enzyme catalyses tRNA(Phe) + L-phenylalanine + ATP = L-phenylalanyl-tRNA(Phe) + AMP + diphosphate + H(+). The chain is Phenylalanine--tRNA ligase alpha subunit from Methylococcus capsulatus (strain ATCC 33009 / NCIMB 11132 / Bath).